A 62-amino-acid chain; its full sequence is MITREQKNEILFLVGEIISLEKDLSFEISSEYGDAETYYELVKSIDKAENDLETYLENLTKD.

This is an uncharacterized protein from Escherichia coli (Bacteriophage T4).